The sequence spans 358 residues: Trace amine-associated receptor 7h (358 aa).

Residues 1–47 (MATDDESFPWDQDSILSRDLLSALSPQLCYENLNRSCVRSPYSPGPR) are Extracellular-facing. N-linked (GlcNAc...) asparagine glycosylation is present at asparagine 34. 2 cysteine pairs are disulfide-bonded: cysteine 37–cysteine 201 and cysteine 120–cysteine 205. The helical transmembrane segment at 48–68 (LILYAVFGFGAVLAVCGNLLV) threads the bilayer. At 69-83 (MTSILHFRQLHSPAN) the chain is on the cytoplasmic side. A helical membrane pass occupies residues 84–104 (FLVASLACADLLVGLTVMPFS). The Extracellular portion of the chain corresponds to 105–125 (MVRSVEGCWYFGDSYCKLHTS). A helical membrane pass occupies residues 126 to 143 (FDMSFCCSSLLHLCFISV). The Cytoplasmic segment spans residues 144-166 (DRYIAVSDPLIYPIRFTASVSGK). A helical transmembrane segment spans residues 167–187 (CITFSWFLSIIYGFSLIYTGA). At 188–217 (SEAGLKDLVSALSCVGGCQIPMNQSCVLIN) the chain is on the extracellular side. Residue asparagine 210 is glycosylated (N-linked (GlcNAc...) asparagine). Residues 218–238 (FLLFLVPTLVMMTVYSKIFLI) form a helical membrane-spanning segment. Residues 239–274 (AKQQAQNMEKMSKQTTRASDSYKDRVAKRERKAAKT) are Cytoplasmic-facing. Residues 275-295 (LGIAVAAFLLSWLPYLIDSII) traverse the membrane as a helical segment. At 296 to 309 (DAFLGFITPSYVYE) the chain is on the extracellular side. Residues 310 to 333 (ILVWIVYYNSAMNPLIYAFFYPWF) form a helical membrane-spanning segment. Over 334 to 358 (RNAIKLIVTGKILKQNSSTTNLFSE) the chain is Cytoplasmic.

This sequence belongs to the G-protein coupled receptor 1 family.

The protein resides in the cell membrane. Functionally, olfactory receptor specific for N,N-dimethylalkylamines trace amines. Trace amine compounds are enriched in animal body fluids and act on trace amine-associated receptors (TAARs) to elicit both intraspecific and interspecific innate behaviors. Ligand-binding causes a conformation change that triggers signaling via G(s)-class of G alpha proteins (GNAL or GNAS). The protein is Trace amine-associated receptor 7h of Rattus norvegicus (Rat).